Reading from the N-terminus, the 508-residue chain is MARTIKIFDTTLRDGEQTPGVNLNLQEKLEIAKQLVRLGVDVIEGGFAIASPGDFESIMTLSRNLKGVTIASLCRSVEKDIDRAWEAVQYAESPRIHTFIATSDIHMKYKLKMTEEEVLERAVSMVKRAKGYCSNVEFSAEDASRTREEFLYRVVEAVIKAGATTVNIPDTVGYSTPLEFGRLIRNIRNNVPNIDKADISVHCHNDLGLAVANSLAAVENGAVQVECTINGLGERAGNAALEEIIMGINTRKDYYDITHRIDTTQIYRASRLVSSLTGVNVQPNKAIVGANAFAHESGIHQHGVLSEKTTYEIMTPESVGMGTNRMVLGKLSGRHAFEDRLKEMGYSLSDEEVKTAFAKFKDLADKKKVVTDKDIEALVDENIAVPEIFVIDSFQINSGNKMISTSTVSVRKDEEIITEAATGDGPVDAAFNAVERATGVNAELVHYRIKAVTEGKDALGEVTVKISNNNSIFMGKGVSTDIIEASVKAYLNAINRSISEIGESIISQ.

Residues 5–267 (IKIFDTTLRD…THRIDTTQIY (263 aa)) form the Pyruvate carboxyltransferase domain. Asp14, His202, His204, and Asn238 together coordinate Mn(2+). Residues 390-508 (VIDSFQINSG…SEIGESIISQ (119 aa)) are regulatory domain.

The protein belongs to the alpha-IPM synthase/homocitrate synthase family. LeuA type 1 subfamily. Homodimer. It depends on Mn(2+) as a cofactor.

The protein resides in the cytoplasm. The enzyme catalyses 3-methyl-2-oxobutanoate + acetyl-CoA + H2O = (2S)-2-isopropylmalate + CoA + H(+). The protein operates within amino-acid biosynthesis; L-leucine biosynthesis; L-leucine from 3-methyl-2-oxobutanoate: step 1/4. Functionally, catalyzes the condensation of the acetyl group of acetyl-CoA with 3-methyl-2-oxobutanoate (2-ketoisovalerate) to form 3-carboxy-3-hydroxy-4-methylpentanoate (2-isopropylmalate). The chain is 2-isopropylmalate synthase from Ruminiclostridium cellulolyticum (strain ATCC 35319 / DSM 5812 / JCM 6584 / H10) (Clostridium cellulolyticum).